Here is a 475-residue protein sequence, read N- to C-terminus: Protein FIZZY-RELATED 1 (475 aa).

The segment at 1–27 is disordered; sequence MEEDESTTPKKKSDSQLNLPPSMNRPT. Polar residues predominate over residues 15–27; that stretch reads SQLNLPPSMNRPT. 7 WD repeats span residues 166–203, 207–246, 249–289, 290–329, 332–374, 376–417, and 420–459; these read QDDFYLNLVDWSAQNVLAVGLGNCVYLWNACSSKVTKL, GVDETVCSVGWALRGTHLAIGTSSGTVQIWDVLRCKNIRT, GHRL…SKLK, GHKSEICGLKWSSDNRELASGGNDNKLFVWNQHSTQPVLR, EHAA…HLNC, DTNS…KLAT, and GHSYRVLYLAVSPDGQTIVTGAGDETLRFWNVFPSPKSQS.

The protein belongs to the WD repeat CDC20/Fizzy family. As to quaternary structure, associates with the APC/C complex. Interacts with CDC20-1, CDC20-2, CYCA1-1, CYCA1-2, CYCA3-4, CYCB1-1 and CYCB1-2. Binds to GIG1. In terms of tissue distribution, expressed in the root tip, predominantly in the root cap, quiescent center cells, surrounding stem cells and columella.

The protein resides in the nucleus. Its pathway is protein modification; protein ubiquitination. In terms of biological role, activator protein that regulates the ubiquitin ligase activity and substrate specificity of the anaphase promoting complex/cyclosome (APC/C). Required for meristem organization and maintenance of quiescent center identity and stem cells. This chain is Protein FIZZY-RELATED 1 (FZR1), found in Arabidopsis thaliana (Mouse-ear cress).